A 775-amino-acid chain; its full sequence is Hepatocyte growth factor-regulated tyrosine kinase substrate (775 aa).

The 129-residue stretch at 15 to 143 (ATSQLLLETD…IMKVEGHVFP (129 aa)) folds into the VHS domain. The segment at 160–220 (WVDAEECHRC…VCEPCYEQLN (61 aa)) adopts an FYVE-type zinc-finger fold. The Zn(2+) site is built by Cys-166, Cys-169, Cys-182, Cys-185, Cys-190, and Cys-193. Lys-207 is subject to N6-acetyllysine. Zn(2+) is bound by residues Cys-212 and Cys-215. Residue Tyr-216 is modified to Phosphotyrosine. The tract at residues 223–319 (AEGKASSTTE…SPVNSSAPLA (97 aa)) is disordered. Residues 225–541 (GKASSTTELP…QRLQEQEKER (317 aa)) are interaction with SNX1. In terms of domain architecture, UIM spans 258–277 (QEEEELQLALALSQSEAEEK). Residues 307 to 316 (LYSSPVNSSA) show a composition bias toward polar residues. A phosphotyrosine mark is found at Tyr-308, Tyr-329, and Tyr-334. Residues 338–405 (KQEEARKSPT…NGESEESHEQ (68 aa)) are disordered. The tract at residues 443-541 (SINTMHPQLL…QRLQEQEKER (99 aa)) is interaction with SNAP25 and TRAK2. An interaction with STAM region spans residues 452–570 (LELLNQLDER…FPLPYAQLQA (119 aa)). The interaction with NF2 stretch occupies residues 478 to 775 (ARGALSALRE…GSEAQLISFD (298 aa)). Lys-549 bears the N6-succinyllysine mark. Residues 640 to 657 (PGAQAAPQAQAGPTTSPA) show a composition bias toward low complexity. Disordered stretches follow at residues 640–690 (PGAQ…PQTS) and 719–775 (QDAS…ISFD). The span at 658-690 (YSSYQPTPTPGYQSVASQAPQSLPAISQPPQTS) shows a compositional bias: polar residues. Residues 744–761 (TGPPQQQPPVAQPAPTQG) show a composition bias toward pro residues.

Component of the ESCRT-0 complex composed of STAM or STAM2 and HGS. Part of a complex at least composed of HSG, STAM2 (or probably STAM) and EPS15. Interacts with STAM. Interacts with STAM2. Interacts with EPS15; the interaction is direct, calcium-dependent and inhibited by SNAP25. Identified in a complex with STAM and LITAF. Found in a complex with STAM and E3 ligase ITCH and DTX3L. Interacts with E3 ligase DTX3L; the interaction brings together STAM and HSG, promotes their recruitment to early endosomes and decreases STAM and HGS ubiquitination by ITCH. Interacts with NF2; the interaction is direct. Interacts with ubiquitin; the interaction is direct. Interacts with VPS37C. Interacts with SMAD1, SMAD2 and SMAD3. Interacts with TSG101; the interaction mediates the association with the ESCRT-I complex. Interacts with SNAP25; the interaction is direct and decreases with addition of increasing concentrations of free calcium. Interacts with SNX1; the interaction is direct. Component of a 550 kDa membrane complex at least composed of HGS and SNX1 but excluding EGFR. Interacts with TRAK1. Interacts with TRAK2. Component of the CART complex, at least composed of ACTN4, HGS/HRS, MYO5B and TRIM3. Interacts with ARRDC3. Identified in a complex containing at least ARRDC4, AVPR2 and HGS. Interacts (via UIM domain) with UBQLN1 (via ubiquitin-like domain). Interacts with LAPTM4B; promotes HGS ubiquitination. Phosphorylated on Tyr-334. This phosphorylation occurs in response to EGF. A minor site of phosphorylation on Tyr-329 is detected. Protein phosphorylation may also be triggered in response to IL-2, GM-CSF and HGF. In terms of processing, ubiquitinated by ITCH. Ubiquitous expression in adult and fetal tissues with higher expression in testis.

It localises to the cytoplasm. The protein resides in the early endosome membrane. It is found in the endosome. Its subcellular location is the multivesicular body membrane. Its function is as follows. Involved in intracellular signal transduction mediated by cytokines and growth factors. When associated with STAM, it suppresses DNA signaling upon stimulation by IL-2 and GM-CSF. Could be a direct effector of PI3-kinase in vesicular pathway via early endosomes and may regulate trafficking to early and late endosomes by recruiting clathrin. May concentrate ubiquitinated receptors within clathrin-coated regions. Involved in down-regulation of receptor tyrosine kinase via multivesicular body (MVBs) when complexed with STAM (ESCRT-0 complex). The ESCRT-0 complex binds ubiquitin and acts as a sorting machinery that recognizes ubiquitinated receptors and transfers them to further sequential lysosomal sorting/trafficking processes. May contribute to the efficient recruitment of SMADs to the activin receptor complex. Involved in receptor recycling via its association with the CART complex, a multiprotein complex required for efficient transferrin receptor recycling but not for EGFR degradation. This chain is Hepatocyte growth factor-regulated tyrosine kinase substrate (Hgs), found in Mus musculus (Mouse).